The sequence spans 244 residues: THO complex subunit 4A (244 aa).

The tract at residues 1 to 82 is disordered; sequence MSTGLDMSLD…EDHRSGRSSA (82 aa). Residue Ser2 is modified to N-acetylserine. The span at 21–35 shows a compositional bias: gly residues; that stretch reads GGAGPARGTGSGSGP. Basic and acidic residues predominate over residues 67–77; that stretch reads MFSDRSEDHRS. The RRM domain occupies 88-165; it reads TKLYISNLDY…KPMKIEIVGT (78 aa). A disordered region spans residues 169–244; that stretch reads TAAAPSGRPA…KYHSGDMETN (76 aa). A compositionally biased stretch (gly residues) spans 187–211; that stretch reads WRGGQGRGGQQRGGGRGGGGRGGGG. The span at 220–244 shows a compositional bias: basic and acidic residues; it reads PAEKISAEDLDADLDKYHSGDMETN.

It belongs to the ALYREF family.

It is found in the nucleus. The protein localises to the nucleoplasm. Its subcellular location is the nucleolus. In terms of biological role, export adapter involved in nuclear export of spliced and unspliced mRNA. In Arabidopsis thaliana (Mouse-ear cress), this protein is THO complex subunit 4A (ALY1).